The chain runs to 364 residues: Uroporphyrinogen decarboxylase (364 aa).

The coproporphyrinogen I site is built by R34, A36, R38, R47, D83, Y161, S216, and H336. 3 residues coordinate coproporphyrinogen III: R34, A36, and R38. Coproporphyrinogen III contacts are provided by D83, Y161, S216, and H336.

Belongs to the uroporphyrinogen decarboxylase family. As to quaternary structure, homodimer.

The protein resides in the cytoplasm. The protein localises to the cytosol. It carries out the reaction uroporphyrinogen III + 4 H(+) = coproporphyrinogen III + 4 CO2. It catalyses the reaction uroporphyrinogen I + 4 H(+) = coproporphyrinogen I + 4 CO2. It functions in the pathway porphyrin-containing compound metabolism; protoporphyrin-IX biosynthesis; coproporphyrinogen-III from 5-aminolevulinate: step 4/4. In terms of biological role, catalyzes the sequential decarboxylation of the four acetate side chains of uroporphyrinogen to form coproporphyrinogen and participates in the fifth step in the heme biosynthetic pathway. Isomer I or isomer III of uroporphyrinogen may serve as substrate, but only coproporphyrinogen III can ultimately be converted to heme. In vitro also decarboxylates pentacarboxylate porphyrinogen I. The protein is Uroporphyrinogen decarboxylase of Rattus norvegicus (Rat).